Consider the following 943-residue polypeptide: MSNSHLGTLCFIISLLGLANFSLSQTGLDDSTMQSLKSSLNLTSDVDWSNPNPCKWQSVQCDGSNRVTKIQLKQKGIRGTLPTNLQSLSELVILELFLNRISGPIPDLSGLSRLQTLNLHDNLFTSVPKNLFSGMSSLQEMYLENNPFDPWVIPDTVKEATSLQNLTLSNCSIIGKIPDFFGSQSLPSLTNLKLSQNGLEGELPMSFAGTSIQSLFLNGQKLNGSISVLGNMTSLVEVSLQGNQFSGPIPDLSGLVSLRVFNVRENQLTGVVPQSLVSLSSLTTVNLTNNYLQGPTPLFGKSVGVDIVNNMNSFCTNVAGEACDPRVDTLVSVAESFGYPVKLAESWKGNNPCVNWVGITCSGGNITVVNMRKQDLSGTISPSLAKLTSLETINLADNKLSGHIPDELTTLSKLRLLDVSNNDFYGIPPKFRDTVTLVTEGNANMGKNGPNKTSDAPGASPGSKPSGGSDGSETSKKSSNVKIIVPVVGGVVGALCLVGLGVCLYAKKRKRPARVQSPSSNMVIHPHHSGDNDDIKLTVAASSLNSGGGSDSYSHSGSAASDIHVVEAGNLVISIQVLRNVTNNFSEENILGRGGFGTVYKGELHDGTKIAVKRMESSVVSDKGLTEFKSEITVLTKMRHRHLVALLGYCLDGNERLLVYEYMPQGTLSQHLFHWKEEGRKPLDWTRRLAIALDVARGVEYLHTLAHQSFIHRDLKPSNILLGDDMRAKVSDFGLVRLAPDGKYSIETRVAGTFGYLAPEYAVTGRVTTKVDIFSLGVILMELITGRKALDETQPEDSVHLVTWFRRVAASKDENAFKNAIDPNISLDDDTVASIEKVWELAGHCCAREPYQRPDMAHIVNVLSSLTVQWKPTETDPDDVYGIDYDMPLPQVLKKWQAFEGLSQTADDSGSSSSAYGSKDNTQTSIPTRPSGFADSFTSVDGR.

The signal sequence occupies residues 1–24 (MSNSHLGTLCFIISLLGLANFSLS). Topologically, residues 25–482 (QTGLDDSTMQ…ETSKKSSNVK (458 aa)) are extracellular. N-linked (GlcNAc...) asparagine glycosylation occurs at N41. C54 and C61 are disulfide-bonded. 10 LRR repeats span residues 64–88 (SNRV…LQSL), 89–111 (SELV…LSGL), 112–134 (SRLQ…LFSG), 136–160 (SSLQ…VKEA), 162–183 (SLQN…FFGS), 186–210 (LPSL…FAGT), 212–232 (IQSL…LGNM), 233–254 (TSLV…DLSG), 255–279 (LVSL…LVSL), and 281–301 (SLTT…LFGK). N165 and N170 each carry an N-linked (GlcNAc...) asparagine glycan. N-linked (GlcNAc...) asparagine glycans are attached at residues N223 and N231. N286 carries an N-linked (GlcNAc...) asparagine glycan. 2 disulfides stabilise this stretch: C315–C323 and C353–C361. LRR repeat units lie at residues 363-386 (GGNI…SLAK), 387-410 (LTSL…ELTT), and 411-438 (LSKL…VTLV). N365 is a glycosylation site (N-linked (GlcNAc...) asparagine). Residues 441–476 (GNANMGKNGPNKTSDAPGASPGSKPSGGSDGSETSK) are disordered. N451 carries an N-linked (GlcNAc...) asparagine glycan. Low complexity predominate over residues 454–467 (SDAPGASPGSKPSG). A helical transmembrane segment spans residues 483 to 503 (IIVPVVGGVVGALCLVGLGVC). Residues 504–943 (LYAKKRKRPA…ADSFTSVDGR (440 aa)) are Cytoplasmic-facing. Residues 514-534 (RVQSPSSNMVIHPHHSGDNDD) are disordered. The 282-residue stretch at 585-866 (FSEENILGRG…AHIVNVLSSL (282 aa)) folds into the Protein kinase domain. ATP is bound by residues 591–599 (LGRGGFGTV) and K613. D714 serves as the catalytic Proton acceptor. Positions 904–943 (QTADDSGSSSSAYGSKDNTQTSIPTRPSGFADSFTSVDGR) are disordered. A compositionally biased stretch (low complexity) spans 906-918 (ADDSGSSSSAYGS). The span at 919-928 (KDNTQTSIPT) shows a compositional bias: polar residues.

This sequence belongs to the protein kinase superfamily. Ser/Thr protein kinase family. In terms of tissue distribution, expressed in roots, leaves, stems, siliques and flowers.

It is found in the membrane. It carries out the reaction L-seryl-[protein] + ATP = O-phospho-L-seryl-[protein] + ADP + H(+). The enzyme catalyses L-threonyl-[protein] + ATP = O-phospho-L-threonyl-[protein] + ADP + H(+). Involved in auxin signal transduction and cell expansion and proliferation regulation. This is Receptor-like kinase TMK3 from Arabidopsis thaliana (Mouse-ear cress).